The chain runs to 388 residues: Na(+)/H(+) antiporter NhaA (388 aa).

At 1 to 11 (MKHLHRFFSSD) the chain is on the cytoplasmic side. The helical transmembrane segment at 12–31 (ASGGIILIIAAILAMIMANS) threads the bilayer. Over 32–58 (GATSGWYHDFLETPVQLRVGSLEINKN) the chain is Periplasmic. Residues 59 to 80 (MLLWINDALMAVFFLLVGLEVK) traverse the membrane as a helical segment. The Cytoplasmic segment spans residues 81-96 (RELMQGSLASLRQAAF). Residues 97–116 (PVIAAIGGMIVPALLYLAFN) form a helical membrane-spanning segment. At 117-122 (YADPIT) the chain is on the periplasmic side. A helical membrane pass occupies residues 123 to 130 (REGWAIPA). Residues 131–154 (ATDIAFALGVLALLGSRVPLALKI) lie on the Cytoplasmic side of the membrane. The chain crosses the membrane as a helical span at residues 155-176 (FLMALAIIDDLGAIIIIALFYT). Topologically, residues 177–180 (NDLS) are periplasmic. A helical membrane pass occupies residues 181-200 (MASLGVAAVAIAVLAVLNLC). The Cytoplasmic segment spans residues 201 to 204 (GVRR). The chain crosses the membrane as a helical span at residues 205 to 222 (TGVYILVGVVLWTAVLKS). Position 223 (glycine 223) is a topological domain, periplasmic. The helical transmembrane segment at 224–236 (VHATLAGVIVGFF) threads the bilayer. Residues 237–253 (IPLKEKHGRSPAKRLEH) lie on the Cytoplasmic side of the membrane. The helical transmembrane segment at 254–272 (VLHPWVAYLILPLFAFANA) threads the bilayer. The Periplasmic segment spans residues 273–286 (GVSLQGVTLDGLTS). The chain crosses the membrane as a helical span at residues 287–310 (ILPLGIIAGLLIGKPLGISLFCWL). The Cytoplasmic portion of the chain corresponds to 311–339 (ALRLKLAHLPEGTTYQQIMAVGILCGIGF). The chain crosses the membrane as a helical span at residues 340 to 350 (TMSIFIASLAF). The Periplasmic segment spans residues 351 to 357 (GSVDPEL). Residues 358-380 (INWAKLGILVGSISSAVIGYSWL) traverse the membrane as a helical segment. Residues 381–388 (RVRLRPSV) are Cytoplasmic-facing.

The protein belongs to the NhaA Na(+)/H(+) (TC 2.A.33) antiporter family.

Its subcellular location is the cell inner membrane. The enzyme catalyses Na(+)(in) + 2 H(+)(out) = Na(+)(out) + 2 H(+)(in). Functionally, na(+)/H(+) antiporter that extrudes sodium in exchange for external protons. The sequence is that of Na(+)/H(+) antiporter NhaA from Escherichia coli O9:H4 (strain HS).